An 806-amino-acid polypeptide reads, in one-letter code: Lon protease 1 (806 aa).

One can recognise a Lon N-terminal domain in the interval 31–235; the sequence is VPLIAVPSHP…KVLELIYEEL (205 aa). 389–396 is a binding site for ATP; sequence GPPGVGKT. The Lon proteolytic domain maps to 626–806; that stretch reads AMYSGMVMGL…NMREVIKLLF (181 aa). Residues serine 714 and lysine 757 contribute to the active site.

It belongs to the peptidase S16 family. Homohexamer. Organized in a ring with a central cavity.

The protein localises to the cytoplasm. It catalyses the reaction Hydrolysis of proteins in presence of ATP.. ATP-dependent serine protease that mediates the selective degradation of mutant and abnormal proteins as well as certain short-lived regulatory proteins. Required for cellular homeostasis and for survival from DNA damage and developmental changes induced by stress. Degrades polypeptides processively to yield small peptide fragments that are 5 to 10 amino acids long. Binds to DNA in a double-stranded, site-specific manner. This Borreliella burgdorferi (strain ATCC 35210 / DSM 4680 / CIP 102532 / B31) (Borrelia burgdorferi) protein is Lon protease 1.